The following is a 254-amino-acid chain: uncharacterized protein (254 aa).

This is an uncharacterized protein from Methanocaldococcus jannaschii (strain ATCC 43067 / DSM 2661 / JAL-1 / JCM 10045 / NBRC 100440) (Methanococcus jannaschii).